A 450-amino-acid polypeptide reads, in one-letter code: Molybdate-anion transporter (450 aa).

Helical transmembrane passes span 1–21 (MLVT…GLEL), 43–63 (LDFY…APYL), 79–99 (ILYV…SSLV), 128–148 (FVLL…FSAF), 176–196 (FWNH…ACWM), 198–218 (LGPV…GALA), 249–269 (VLLL…FVFL), 278–298 (GAPL…GSSL), 311–331 (PMHL…MLTF), 344–364 (FIAF…MSFL), 376–396 (GVLN…LLVL), and 409–429 (FSIC…LFTV).

It belongs to the major facilitator superfamily.

Its subcellular location is the cell membrane. Its function is as follows. Mediates high-affinity intracellular uptake of the rare oligo-element molybdenum. This Bos taurus (Bovine) protein is Molybdate-anion transporter (MFSD5).